The sequence spans 265 residues: Acetylglutamate kinase (265 aa).

Substrate-binding positions include 41 to 42 (GG), Arg-63, and Asn-156.

The protein belongs to the acetylglutamate kinase family. ArgB subfamily.

The protein resides in the cytoplasm. The catalysed reaction is N-acetyl-L-glutamate + ATP = N-acetyl-L-glutamyl 5-phosphate + ADP. It participates in amino-acid biosynthesis; L-arginine biosynthesis; N(2)-acetyl-L-ornithine from L-glutamate: step 2/4. Functionally, catalyzes the ATP-dependent phosphorylation of N-acetyl-L-glutamate. This chain is Acetylglutamate kinase, found in Oceanobacillus iheyensis (strain DSM 14371 / CIP 107618 / JCM 11309 / KCTC 3954 / HTE831).